The chain runs to 391 residues: GTPase Obg (391 aa).

Residues 1 to 159 (MKFIDEALIR…RDLQLELMLL (159 aa)) enclose the Obg domain. The OBG-type G domain maps to 160 to 333 (ADVGMLGLPN…LTRDIMDFIE (174 aa)). GTP is bound by residues 166–173 (GLPNAGKS), 191–195 (FTTLV), 213–216 (DIPG), 283–286 (NKID), and 314–316 (SAA). Residues Ser173 and Thr193 each contribute to the Mg(2+) site. The disordered stretch occupies residues 361–391 (QNPITEDDWDDLDDDGWTEEDDEGVEFIYKP). The segment covering 365-385 (TEDDWDDLDDDGWTEEDDEGV) has biased composition (acidic residues).

This sequence belongs to the TRAFAC class OBG-HflX-like GTPase superfamily. OBG GTPase family. Monomer. Requires Mg(2+) as cofactor.

It is found in the cytoplasm. Functionally, an essential GTPase which binds GTP, GDP and possibly (p)ppGpp with moderate affinity, with high nucleotide exchange rates and a fairly low GTP hydrolysis rate. Plays a role in control of the cell cycle, stress response, ribosome biogenesis and in those bacteria that undergo differentiation, in morphogenesis control. In Glaesserella parasuis serovar 5 (strain SH0165) (Haemophilus parasuis), this protein is GTPase Obg.